The following is a 397-amino-acid chain: Multidrug efflux pump subunit AcrA (397 aa).

The N-terminal stretch at 1–24 is a signal peptide; the sequence is MNKNRGFTPLAVVLMLSGSLALTG. Cys-25 carries N-palmitoyl cysteine lipidation. The S-diacylglycerol cysteine moiety is linked to residue Cys-25. The stretch at 98–172 forms a coiled coil; sequence PATYQATYDS…AVETARINLA (75 aa). The disordered stretch occupies residues 377–397; sequence EVTADNNQQAASGAQPEQSKS. A compositionally biased stretch (polar residues) spans 379 to 397; that stretch reads TADNNQQAASGAQPEQSKS.

This sequence belongs to the membrane fusion protein (MFP) (TC 8.A.1) family. In terms of assembly, monomeric in solution. Homotrimeric; interacts independently with AcrB and TolC as well as AcrZ. Part of the AcrA-AcrB-TolC efflux pump.

It is found in the cell inner membrane. Its function is as follows. AcrA-AcrB-AcrZ-TolC is a drug efflux protein complex with broad substrate specificity that uses the proton motive force to export substrates. This subunit may act as an adapter protein that links AcrB and TolC stably together. The chain is Multidrug efflux pump subunit AcrA (acrA) from Escherichia coli O157:H7.